The chain runs to 313 residues: Non-structural protein 3 (313 aa).

Residues 1-149 are RNA-binding; it reads MLKMESTQQM…TRLMRDKIER (149 aa). Positions 150 to 206 are dimerization; the sequence is GEVEVDDSFVEEKMEVDTIDWKSRYEQLEKRFESLKQRVNEKYTSWVQKAKKVNENM. Residues 166–237 are a coiled coil; the sequence is DTIDWKSRYE…NKLEVDLQNK (72 aa). Positions 170-234 are interaction with host ZC3H7B; the sequence is WKSRYEQLEK…NYCNKLEVDL (65 aa). Positions 208-313 are interaction with host EIF4G1; the sequence is SLQNVISQQQ…RQCNYEYTYE (106 aa).

The protein belongs to the rotavirus NSP3 family. Homodimer. Interacts (via the coiled-coil region) with host ZC3H7B (via LD motif). Interacts with host EIF4G1.

The protein resides in the host cytoplasm. Its function is as follows. Plays an important role in stimulating the translation of viral mRNAs. These mRNAs are capped but not polyadenylated, instead terminating in a conserved sequence 'GACC' at the 3' that is recognized by NSP3, which competes with host PABPC1 for EIF4G1 binding. The interaction between NSP3 and host EIF4G1 stabilizes the EIF4E-EIF4G1 interaction, thereby facilitating the initiation of capped mRNA translation. The chain is Non-structural protein 3 from Rotavirus A (strain RVA/Cow/United States/WC3/1981/G6P7[5]) (RV-A).